A 252-amino-acid chain; its full sequence is Fructose-1,6-bisphosphatase/inositol-1-monophosphatase (252 aa).

Positions 38, 40, 67, 82, 84, and 85 each coordinate Mg(2+). Residues 85–87 (DGT), arginine 167, alanine 172, and arginine 191 contribute to the substrate site. Residue aspartate 200 participates in Mg(2+) binding.

The protein belongs to the inositol monophosphatase superfamily. FBPase class 4 family. In terms of assembly, homodimer. Mg(2+) is required as a cofactor. Requires Mn(2+) as cofactor.

The enzyme catalyses beta-D-fructose 1,6-bisphosphate + H2O = beta-D-fructose 6-phosphate + phosphate. The catalysed reaction is a myo-inositol phosphate + H2O = myo-inositol + phosphate. With respect to regulation, both FBPase and IMPase activities are inhibited by Ca(2+). In contrast to mammalian I-1-P phosphatases, is only very weakly inhibited by Li(+) (with an IC(50) of about 290 mM). Functionally, phosphatase with broad specificity; it can dephosphorylate fructose 1,6-bisphosphate, both D and L isomers of inositol-1-phosphate (I-1-P), 2'-AMP, pNPP, inositol-2-phosphate, beta-glycerol phosphate, and alpha-D-glucose-1-phosphate. Cannot hydrolyze glucose-6-phosphate and fructose-6-phosphate. May be involved in the biosynthesis of a unique osmolyte, di-myo-inositol 1,1-phosphate. This Archaeoglobus fulgidus (strain ATCC 49558 / DSM 4304 / JCM 9628 / NBRC 100126 / VC-16) protein is Fructose-1,6-bisphosphatase/inositol-1-monophosphatase (suhB).